The following is a 394-amino-acid chain: Monoterpene synthase FDS-5, chloroplastic (394 aa).

The N-terminal 65 residues, 1–65 (MASFISLSSK…NLNSQFMQVY (65 aa)), are a transit peptide targeting the chloroplast. Isopentenyl diphosphate-binding residues include K100, R103, and Q138. Residues D145 and D149 each coordinate Mg(2+). The DDXXD motif motif lies at 145-149 (DDMMD). R154 is a dimethylallyl diphosphate binding site. R155 provides a ligand contact to isopentenyl diphosphate. 4 residues coordinate dimethylallyl diphosphate: K242, Q281, K298, and K307.

Belongs to the FPP/GGPP synthase family. The cofactor is Mg(2+). Mn(2+) serves as cofactor.

The protein resides in the plastid. Its subcellular location is the chloroplast. The catalysed reaction is isopentenyl diphosphate + dimethylallyl diphosphate = (2E)-geranyl diphosphate + diphosphate. It carries out the reaction 2 dimethylallyl diphosphate = (R,R)-chrysanthemyl diphosphate + diphosphate. The enzyme catalyses 2 dimethylallyl diphosphate = (R)-lavandulyl diphosphate + diphosphate. Its function is as follows. Condenses two molecules of dimethylallyl diphosphate (DMAPP) to produce mainly an irregular monoterpene, chrysanthemyl diphosphate (CPP) and lower amounts of a branched monoterpene, lavandulyl diphosphate (LPP). CPP is a precursor of the pyrethrin insecticides. When incubated with isopentenyl diphosphate (IPP) and DMAPP, catalyzes three competing isoprenoid condensation reactions, a chain elongation to give geranyl diphosphate (GPP), a cyclopropanation to give CPP and a branching to give LPP. The chain is Monoterpene synthase FDS-5, chloroplastic (FDS-5) from Artemisia spiciformis (Spiked big sagebrush).